A 38-amino-acid polypeptide reads, in one-letter code: Photosystem II reaction center protein L (38 aa).

The chain crosses the membrane as a helical span at residues 17 to 37 (SLYWGLLLIFVLAVLFSNYSF).

Belongs to the PsbL family. In terms of assembly, PSII is composed of 1 copy each of membrane proteins PsbA, PsbB, PsbC, PsbD, PsbE, PsbF, PsbH, PsbI, PsbJ, PsbK, PsbL, PsbM, PsbT, PsbX, PsbY, PsbZ, Psb30/Ycf12, at least 3 peripheral proteins of the oxygen-evolving complex and a large number of cofactors. It forms dimeric complexes.

The protein resides in the plastid. The protein localises to the chloroplast thylakoid membrane. Its function is as follows. One of the components of the core complex of photosystem II (PSII). PSII is a light-driven water:plastoquinone oxidoreductase that uses light energy to abstract electrons from H(2)O, generating O(2) and a proton gradient subsequently used for ATP formation. It consists of a core antenna complex that captures photons, and an electron transfer chain that converts photonic excitation into a charge separation. This subunit is found at the monomer-monomer interface and is required for correct PSII assembly and/or dimerization. This is Photosystem II reaction center protein L from Bowenia serrulata (Byfield fern).